Here is a 397-residue protein sequence, read N- to C-terminus: 1-deoxy-D-xylulose 5-phosphate reductoisomerase (397 aa).

NADPH is bound by residues threonine 12, glycine 13, serine 14, isoleucine 15, glycine 38, lysine 39, asparagine 40, and asparagine 126. A 1-deoxy-D-xylulose 5-phosphate-binding site is contributed by lysine 127. Glutamate 128 is a binding site for NADPH. Mn(2+) is bound at residue aspartate 152. Positions 153, 154, 188, and 211 each coordinate 1-deoxy-D-xylulose 5-phosphate. Residue glutamate 154 coordinates Mn(2+). Glycine 217 lines the NADPH pocket. 1-deoxy-D-xylulose 5-phosphate-binding residues include serine 224, asparagine 229, lysine 230, and glutamate 233. Mn(2+) is bound at residue glutamate 233.

This sequence belongs to the DXR family. Requires Mg(2+) as cofactor. It depends on Mn(2+) as a cofactor.

The catalysed reaction is 2-C-methyl-D-erythritol 4-phosphate + NADP(+) = 1-deoxy-D-xylulose 5-phosphate + NADPH + H(+). Its pathway is isoprenoid biosynthesis; isopentenyl diphosphate biosynthesis via DXP pathway; isopentenyl diphosphate from 1-deoxy-D-xylulose 5-phosphate: step 1/6. Its function is as follows. Catalyzes the NADPH-dependent rearrangement and reduction of 1-deoxy-D-xylulose-5-phosphate (DXP) to 2-C-methyl-D-erythritol 4-phosphate (MEP). In Haemophilus influenzae (strain 86-028NP), this protein is 1-deoxy-D-xylulose 5-phosphate reductoisomerase.